The following is a 432-amino-acid chain: Fibroleukin (432 aa).

An N-terminal signal peptide occupies residues 1–19 (MRLPGWLWLSSAVLAACRA). Residue asparagine 24 is glycosylated (N-linked (GlcNAc...) asparagine). Positions 71-157 (GSMEEVLKEV…QGRLETLHLV (87 aa)) form a coiled coil. A disordered region spans residues 100–122 (QADDHRDPGGNGGNGAETAEDSR). N-linked (GlcNAc...) asparagine glycans are attached at residues asparagine 172, asparagine 228, asparagine 256, and asparagine 329. Residues 197–429 (PVQHLIYKDC…QAKMMIRPKN (233 aa)) form the Fibrinogen C-terminal domain. Cysteine 206 and cysteine 235 are oxidised to a cystine. A disulfide bond links cysteine 364 and cysteine 377.

Homotetramer; disulfide-linked. In terms of tissue distribution, constitutively expressed in cytotoxic T-cells.

It localises to the secreted. Converts prothrombin to thrombin. This chain is Fibroleukin (Fgl2), found in Mus musculus (Mouse).